Consider the following 412-residue polypeptide: MQSWSDTALPTVPGAGPPLRLYDTADRQVRPVAPGATATMYVCGITPYDATHLGHAATYLTFDLVNRVLRDGGHDVHYVQNVTDVDDPLFERAARDGVDWRELGSREIELFRTDMAALRVLPPREYVGAVESVEEVVEFVQKLLANGAAYVVDDPDFPDIYFRTDATEQFGYESGYDRATMERLFAERGGDPDRPGKRDPLDALLWRAARPGEPSWPAPFGAGRPGWHIECSAIALNRLGPEFDIQGGGSDLIYPHHEYSAAHAESVVAGRRFARHYVHAGLIGLDGEKMSKSRGNLVLVSTLRKDGVDPAAIRLGLLDGHYRQDRMWTDAVLEAALARLARWRSATALSAGPAAHDTIARLRQHLADDLDSPKALAAVDNWVTEALDYGGSDSGAPAAIAEAVDALLGVRL.

Cysteine 43 serves as a coordination point for Zn(2+). L-cysteinyl-5'-AMP-binding positions include 43-46 (CGIT), threonine 58, and 81-83 (NVT). The short motif at 45-55 (ITPYDATHLGH) is the 'HIGH' region element. The 'ERGGDP' region motif lies at 187-192 (ERGGDP). Tryptophan 227 serves as a coordination point for L-cysteinyl-5'-AMP. Cysteine 231 provides a ligand contact to Zn(2+). An L-cysteinyl-5'-AMP-binding site is contributed by 249–251 (GSD). A Zn(2+)-binding site is contributed by histidine 256. Isoleucine 283 is a binding site for L-cysteinyl-5'-AMP. The short motif at 289 to 293 (KMSKS) is the 'KMSKS' region element.

It belongs to the class-I aminoacyl-tRNA synthetase family. MshC subfamily. Monomer. It depends on Zn(2+) as a cofactor.

The enzyme catalyses 1D-myo-inositol 2-amino-2-deoxy-alpha-D-glucopyranoside + L-cysteine + ATP = 1D-myo-inositol 2-(L-cysteinylamino)-2-deoxy-alpha-D-glucopyranoside + AMP + diphosphate + H(+). Catalyzes the ATP-dependent condensation of GlcN-Ins and L-cysteine to form L-Cys-GlcN-Ins. This chain is L-cysteine:1D-myo-inositol 2-amino-2-deoxy-alpha-D-glucopyranoside ligase (mshC), found in Nocardia farcinica (strain IFM 10152).